The chain runs to 182 residues: ATP-dependent protease subunit HslV (182 aa).

Residue Thr12 is part of the active site. Residues Ala167, Cys170, and Thr173 each contribute to the Na(+) site.

It belongs to the peptidase T1B family. HslV subfamily. A double ring-shaped homohexamer of HslV is capped on each side by a ring-shaped HslU homohexamer. The assembly of the HslU/HslV complex is dependent on binding of ATP.

The protein localises to the cytoplasm. The enzyme catalyses ATP-dependent cleavage of peptide bonds with broad specificity.. Allosterically activated by HslU binding. In terms of biological role, protease subunit of a proteasome-like degradation complex believed to be a general protein degrading machinery. The sequence is that of ATP-dependent protease subunit HslV from Chlorobium phaeobacteroides (strain BS1).